We begin with the raw amino-acid sequence, 351 residues long: Formyl peptide receptor-related sequence 1 (351 aa).

Residues 1-27 are Extracellular-facing; sequence METNYSIPLNGSDVVIYDSTISRVLWI. Asn-4 and Asn-10 each carry an N-linked (GlcNAc...) asparagine glycan. A helical membrane pass occupies residues 28 to 50; sequence LSMVVVSITFFLGVLGNGLVIWV. Over 51-61 the chain is Cytoplasmic; the sequence is AGFRMPHTVTT. Residues 62–83 form a helical membrane-spanning segment; it reads IWYLNLALADFSFTATLPFLLV. Over 84-100 the chain is Extracellular; it reads EMAMKEKWPFGWFLCKL. Cys-98 and Cys-176 are joined by a disulfide. The chain crosses the membrane as a helical span at residues 101–121; the sequence is VHIAVDVNLFGSVFLIAVIAL. The Cytoplasmic segment spans residues 122–140; it reads DRCICVLHPVWAQNHRTVS. A helical transmembrane segment spans residues 141 to 162; the sequence is LARNVVVGSWIFALILTLPLFL. Residues 163 to 205 are Extracellular-facing; it reads FLTTVRDARGDVHCRLSFVSWGNSVEERLNTAITFVTTRGIIR. Residues 206–226 traverse the membrane as a helical segment; sequence FIVSFSLPMSFVAICYGLITT. Residues 227 to 242 are Cytoplasmic-facing; the sequence is KIHKKAFVNSSRPFRV. Residues 243 to 266 traverse the membrane as a helical segment; sequence LTGVVASFFICWFPFQLVALLGTV. The Extracellular segment spans residues 267-286; the sequence is WLKEMQFSGSYKIIGRLVNP. Residues 287–306 form a helical membrane-spanning segment; it reads TSSLAFFNSCLNPILYVFMG. Over 307–351 the chain is Cytoplasmic; that stretch reads QDFQERLIHSLSSRLQRALSEDSGHISDTRTNLASLPEDIEIKAI.

This sequence belongs to the G-protein coupled receptor 1 family. As to expression, expressed exclusively in vomeronasal neurons. Expressed in 0.6 % of a subset of sensory neurons located in the basal layer of the vomeronasal organ. Each neuron appears to express only one receptor gene. Expressed mostly in neutrophils, followed by spleen and lung and expressed at very low levels in heart and liver.

The protein resides in the cell membrane. Functionally, low affinity receptor for N-formyl-methionyl peptides. Receptor for lipoxin A4. May have an olfactory function associated with the identification of pathogens or of pathogenic states. The sequence is that of Formyl peptide receptor-related sequence 1 (Fpr-s1) from Mus musculus (Mouse).